Reading from the N-terminus, the 226-residue chain is Uracil-DNA glycosylase (226 aa).

Asp64 serves as the catalytic Proton acceptor.

It belongs to the uracil-DNA glycosylase (UDG) superfamily. UNG family.

Its subcellular location is the cytoplasm. It carries out the reaction Hydrolyzes single-stranded DNA or mismatched double-stranded DNA and polynucleotides, releasing free uracil.. In terms of biological role, excises uracil residues from the DNA which can arise as a result of misincorporation of dUMP residues by DNA polymerase or due to deamination of cytosine. The chain is Uracil-DNA glycosylase from Fusobacterium nucleatum subsp. nucleatum (strain ATCC 25586 / DSM 15643 / BCRC 10681 / CIP 101130 / JCM 8532 / KCTC 2640 / LMG 13131 / VPI 4355).